A 754-amino-acid chain; its full sequence is Aspartyl/asparaginyl beta-hydroxylase (754 aa).

The disordered stretch occupies residues 1–48 (MAPRKNAKGGGGNSSSSSSGSPTGCTSGGSSSPGARRETKQGGLKNGR). Residues 1-56 (MAPRKNAKGGGGNSSSSSSGSPTGCTSGGSSSPGARRETKQGGLKNGRKGGLSGSS) lie on the Cytoplasmic side of the membrane. The span at 14 to 34 (SSSSSSGSPTGCTSGGSSSPG) shows a compositional bias: low complexity. The residue at position 15 (Ser15) is a Phosphoserine. Residues 57–77 (FFTWFMVIALLGVWTSVAVVW) traverse the membrane as a helical; Signal-anchor for type II membrane protein segment. At 78-754 (FDLVDYEEVL…PHQRRSLPAI (677 aa)) the chain is on the lumenal side. Asn96 is a glycosylation site (N-linked (GlcNAc...) asparagine). Positions 109, 111, 113, 115, and 120 each coordinate Ca(2+). 2 disordered regions span residues 176 to 197 (VYSE…ELQP) and 247 to 326 (EQEN…KKKK). 2 stretches are compositionally biased toward basic and acidic residues: residues 261-284 (DAER…DHAV) and 309-318 (TNKKADEPGK). TPR repeat units lie at residues 337-370 (IKAE…YPQS), 378-411 (AQCE…PDAP), 450-483 (TALK…TPND), 485-517 (FAKV…GDPG), and 521-553 (GRFY…GHFA). The N-linked (GlcNAc...) asparagine glycan is linked to Asn466. Trp621 is a 2-oxoglutarate binding site. A disulfide bridge links Cys637 with Cys644. Residue Ser664 coordinates 2-oxoglutarate. Residue His675 participates in Fe cation binding. Residue 684–686 (RMH) participates in 2-oxoglutarate binding. Asn702 carries N-linked (GlcNAc...) asparagine glycosylation. His721 is a Fe cation binding site. A 2-oxoglutarate-binding site is contributed by Arg731.

The protein belongs to the aspartyl/asparaginyl beta-hydroxylase family. As to quaternary structure, monomer. It depends on Fe cation as a cofactor. Post-translationally, might be processed to the 56 kDa (AA 289-754) or 52 kDa (AA 311-754) forms in the lumen of the endoplasmic reticulum.

The protein localises to the endoplasmic reticulum membrane. The enzyme catalyses L-aspartyl-[protein] + 2-oxoglutarate + O2 = 3-hydroxy-L-aspartyl-[protein] + succinate + CO2. Its function is as follows. Specifically hydroxylates an Asp or Asn residue in certain epidermal growth factor-like (EGF) domains of a number of proteins. This is Aspartyl/asparaginyl beta-hydroxylase (ASPH) from Bos taurus (Bovine).